The chain runs to 82 residues: Cytochrome c-551 (82 aa).

The heme c site is built by Cys12, Cys15, His16, and Met61.

In terms of processing, binds 1 heme c group covalently per subunit.

This is Cytochrome c-551 from Azotobacter vinelandii.